A 256-amino-acid polypeptide reads, in one-letter code: Small ribosomal subunit protein eS1 (256 aa).

The span at 1 to 18 (MAVGKNKRLSKGKKGIKK) shows a compositional bias: basic residues. The segment at 1–20 (MAVGKNKRLSKGKKGIKKRT) is disordered. Ala-2 carries the N-acetylalanine; partial modification.

This sequence belongs to the eukaryotic ribosomal protein eS1 family. Component of the small ribosomal subunit. Mature ribosomes consist of a small (40S) and a large (60S) subunit. The 40S subunit contains about 33 different proteins and 1 molecule of RNA (18S). The 60S subunit contains about 49 different proteins and 3 molecules of RNA (25S, 5.8S and 5S).

It localises to the cytoplasm. This is Small ribosomal subunit protein eS1 (rps1) from Aspergillus flavus (strain ATCC 200026 / FGSC A1120 / IAM 13836 / NRRL 3357 / JCM 12722 / SRRC 167).